The primary structure comprises 179 residues: MSRIGKLPIKLPPGIKVSIEGNNVTLEGKKGKLFHRLPEFLKVHQQDGSLILENTADSRQSKAMYGLHRSLLNNAVMGVHEGFQKKLEINGIGFRAAVEGKKLVMNLGFSHPVVYEIPEGISVKVQDNTKLTIEGIDKCLVGAVAADIRGFYVPEPYKGKGIRYAGEVIRRKAGKTAQK.

It belongs to the universal ribosomal protein uL6 family. Part of the 50S ribosomal subunit.

Its function is as follows. This protein binds to the 23S rRNA, and is important in its secondary structure. It is located near the subunit interface in the base of the L7/L12 stalk, and near the tRNA binding site of the peptidyltransferase center. The polypeptide is Large ribosomal subunit protein uL6 (Methylacidiphilum infernorum (isolate V4) (Methylokorus infernorum (strain V4))).